A 688-amino-acid chain; its full sequence is ATP-dependent RNA helicase ded1 (688 aa).

2 stretches are compositionally biased toward polar residues: residues 1–15 and 55–67; these read MADQLSSGMGNLSID and GLNNSAWAGNNNY. Residues 1-170 form a disordered region; that stretch reads MADQLSSGMG…TPDDPSKQHT (170 aa). Over residues 88–102 the composition is skewed to gly residues; that stretch reads GFEGQQGAGWGGPRP. A compositionally biased stretch (low complexity) spans 103–114; the sequence is QGGFNPNAYRGN. Over residues 115–129 the composition is skewed to gly residues; the sequence is AGAGAGAGAGGGGGS. Positions 194–222 match the Q motif motif; that stretch reads LTFSNPPLDNHLISNIQLARYNVPTPVQK. Positions 225-416 constitute a Helicase ATP-binding domain; that stretch reads IPIVMGGRDL…RDFLKDYIFL (192 aa). Residue 238 to 245 coordinates ATP; it reads AQTGSGKT. Positions 360–363 match the DEAD box motif; it reads DEAD. In terms of domain architecture, Helicase C-terminal spans 427-587; the sequence is NITQKVEYVE…EVPAFLETIA (161 aa). The disordered stretch occupies residues 590 to 615; sequence SSFGGGRGGRGGGRGGGRGRTQTADY. The segment covering 592–608 has biased composition (gly residues); that stretch reads FGGGRGGRGGGRGGGRG.

This sequence belongs to the DEAD box helicase family. DDX3/DED1 subfamily.

It is found in the cytoplasm. It carries out the reaction ATP + H2O = ADP + phosphate + H(+). ATP-binding RNA helicase involved in translation initiation. Remodels RNA in response to ADP and ATP concentrations by facilitating disruption, but also formation of RNA duplexes. This is ATP-dependent RNA helicase ded1 (drh-9) from Neurospora crassa (strain ATCC 24698 / 74-OR23-1A / CBS 708.71 / DSM 1257 / FGSC 987).